The primary structure comprises 180 residues: MKSLYFVAGLFVMLVQGSWQRSLQNTEEKSSSFPAPQTDPLGDPDQINEDKRHSQGTFTSDYSKYLDSRRAQDFVQWLMNTKRNKNNIAKRHDEFERHAEGTFTSDVSSYLEGQAAKEFIAWLVKGRGRRDFPEEVNIVEELRRRHADGSFSDEMNTVLDSLATRDFINWLLQTKITDRK.

The first 20 residues, 1–20 (MKSLYFVAGLFVMLVQGSWQ), serve as a signal peptide directing secretion. Over residues 25–35 (NTEEKSSSFPA) the composition is skewed to polar residues. The segment at 25 to 59 (NTEEKSSSFPAPQTDPLGDPDQINEDKRHSQGTFT) is disordered. S54 is subject to Phosphoserine. Positions 84-89 (NKNNIA) are excised as a propeptide. S105 and S108 each carry phosphoserine. R127 carries the post-translational modification Arginine amide. Residues 131-145 (DFPEEVNIVEELRRR) constitute a propeptide that is removed on maturation. A phosphoserine mark is found at S150 and S152.

It belongs to the glucagon family. In terms of processing, proglucagon is post-translationally processed in a tissue-specific manner in pancreatic A cells and intestinal L cells. In pancreatic A cells, the major bioactive hormone is glucagon cleaved by PCSK2/PC2. In the intestinal L cells PCSK1/PC1 liberates GLP-1, GLP-2, glicentin and oxyntomodulin. GLP-1 is further N-terminally truncated by post-translational processing in the intestinal L cells resulting in GLP-1(7-37) GLP-1-(7-36)amide. The C-terminal amidation is neither important for the metabolism of GLP-1 nor for its effects on the endocrine pancreas. As to expression, glucagon is secreted in the A cells of the islets of Langerhans. GLP-1, GLP-2, oxyntomodulin and glicentin are secreted from enteroendocrine cells throughout the gastrointestinal tract.

It is found in the secreted. In terms of biological role, plays a key role in glucose metabolism and homeostasis. Regulates blood glucose by increasing gluconeogenesis and decreasing glycolysis. A counterregulatory hormone of insulin, raises plasma glucose levels in response to insulin-induced hypoglycemia. Plays an important role in initiating and maintaining hyperglycemic conditions in diabetes. Potent stimulator of glucose-dependent insulin release. Also stimulates insulin release in response to IL6. Plays important roles on gastric motility and the suppression of plasma glucagon levels. May be involved in the suppression of satiety and stimulation of glucose disposal in peripheral tissues, independent of the actions of insulin. Has growth-promoting activities on intestinal epithelium. May also regulate the hypothalamic pituitary axis (HPA) via effects on LH, TSH, CRH, oxytocin, and vasopressin secretion. Increases islet mass through stimulation of islet neogenesis and pancreatic beta cell proliferation. Inhibits beta cell apoptosis. Functionally, stimulates intestinal growth and up-regulates villus height in the small intestine, concomitant with increased crypt cell proliferation and decreased enterocyte apoptosis. The gastrointestinal tract, from the stomach to the colon is the principal target for GLP-2 action. Plays a key role in nutrient homeostasis, enhancing nutrient assimilation through enhanced gastrointestinal function, as well as increasing nutrient disposal. Stimulates intestinal glucose transport and decreases mucosal permeability. Its function is as follows. Significantly reduces food intake. Inhibits gastric emptying in humans. Suppression of gastric emptying may lead to increased gastric distension, which may contribute to satiety by causing a sensation of fullness. In terms of biological role, may modulate gastric acid secretion and the gastro-pyloro-duodenal activity. May play an important role in intestinal mucosal growth in the early period of life. The polypeptide is Pro-glucagon (GCG) (Bos taurus (Bovine)).